Here is a 135-residue protein sequence, read N- to C-terminus: Alpha-ketoglutarate dehydrogenase subunit 4, mitochondrial (135 aa).

Belongs to the alpha-ketoglutarate dehydrogenase component 4 family. Component of the 2-oxoglutarate dehydrogenase complex (OGDC), also called alpha-ketoglutarate dehydrogenase (KGDH) complex. The copmplex is composed of the catalytic subunits OGDH (2-oxoglutarate dehydrogenase; also called E1 subunit), DLST (dihydrolipoamide succinyltransferase; also called E2 subunit) and DLD (dihydrolipoamide dehydrogenase; also called E3 subunit), and the assembly factor KGD4. Within OGDC, interacts (via N-terminus) with E3 subunit and (via C-terminus) with the complex core formed by E1 and E2 subunits.

The protein resides in the mitochondrion. In terms of biological role, molecular adapter that is necessary to a form a stable 2-oxoglutarate dehydrogenase enzyme complex (OGDC). Required for incorporation of the E3 subunit into the E1-E2 core of mitochondrial OGDC, and acting as a stability factor for the fully assembled complex. This is Alpha-ketoglutarate dehydrogenase subunit 4, mitochondrial (KGD4) from Chaetomium thermophilum (strain DSM 1495 / CBS 144.50 / IMI 039719) (Thermochaetoides thermophila).